The following is a 209-amino-acid chain: Tektin bundle-interacting protein 1 (209 aa).

In terms of assembly, microtubule inner protein component of sperm flagellar doublet microtubules.

The protein resides in the cytoplasm. The protein localises to the cytoskeleton. Its subcellular location is the cilium axoneme. It localises to the flagellum axoneme. Functionally, microtubule inner protein (MIP) part of the dynein-decorated doublet microtubules (DMTs) in cilia axoneme, which is required for motile cilia beating. Located at the center of the tektin bundle where may function to recruit tektins or stabilize the bundle. In Macaca fascicularis (Crab-eating macaque), this protein is Tektin bundle-interacting protein 1 (TEKTIP1).